Here is a 227-residue protein sequence, read N- to C-terminus: PKHD-type hydroxylase Bcen_3557 (227 aa).

Residues 78-178 form the Fe2OG dioxygenase domain; it reads KVFPPLFNRY…RVASFFWIQS (101 aa). Fe cation-binding residues include His-96, Asp-98, and His-159. Arg-169 is a binding site for 2-oxoglutarate.

Fe(2+) serves as cofactor. Requires L-ascorbate as cofactor.

This is PKHD-type hydroxylase Bcen_3557 from Burkholderia orbicola (strain AU 1054).